A 236-amino-acid polypeptide reads, in one-letter code: Thymidylate kinase (236 aa).

Gly9–Ser16 lines the ATP pocket.

It belongs to the thymidylate kinase family.

It carries out the reaction dTMP + ATP = dTDP + ADP. Functionally, phosphorylation of dTMP to form dTDP in both de novo and salvage pathways of dTTP synthesis. The chain is Thymidylate kinase from Herpetosiphon aurantiacus (strain ATCC 23779 / DSM 785 / 114-95).